Here is a 552-residue protein sequence, read N- to C-terminus: MTTFLKSLIFLQDSCLAFLSLMFHRGSSEDAAEALKKLETSINGARISFDTTWTREFRSLFIVPLFKCLVAFCLIISLLVFIEGIYMNLVVLYVKVFERKPEKVYRWEAMQEDIELGHETYPMVLVQIPMYNEKEVLQLSIGAACRLIWPLDRLIVQVLDDSTDQTIKELVNTECAKWESKGVNIKCERRDNRNGYKAGALKEGMKHNYVKLCNYVVIFDADFQPEPDYLQHSVPFLVHNPEVALVQARWRFMNANKCLMTRMQEMSLNYHFMAEQESGSTRHAFFSFNGTAGVWRMAAMEEAGGWHDRTTVEDMDLAVRAGLLGWKFVFLNDLTVKSELPSKFKAFRFQQHRWSCGPANLFRKMIMEIIRNKRVTIWKKLYLVYSFFFLRKIIVHCFTFIFYCVILPTSVFFPEVNIPAWSTFYIPSMITLCIVIATPRSFYLVIFWILFENVMSMHRTKGTFIGILERQRVNEWVVTEKLGDALKTKLLPRIGKPSNMFLERVNSKEIMVGIYILCCACYGLFFGNTLLYLYLFMQAVAFLISGVGFVGT.

A helical membrane pass occupies residues 62 to 82; sequence IVPLFKCLVAFCLIISLLVFI. Aspartate 161 is a catalytic residue. Substrate is bound by residues aspartate 220 and aspartate 222. Aspartate 314 is an active-site residue. A run of 4 helical transmembrane segments spans residues 393–413, 430–450, 509–529, and 530–550; these read IIVH…SVFF, ITLC…FWIL, EIMV…FGNT, and LLYL…VGFV.

It belongs to the glycosyltransferase 2 family. Plant cellulose synthase-like A subfamily.

Its subcellular location is the golgi apparatus membrane. It carries out the reaction GDP-mannose + (glucomannan)n = GDP + (glucomannan)n+1.. Its function is as follows. Probable mannan synthase which consists of a 4-beta-mannosyltransferase activity on mannan using GDP-mannose. The beta-1,4-mannan product is the backbone for galactomannan synthesis by galactomannan galactosyltransferase. Galactomannan is a noncellulosic polysaccharides of plant cell wall. The protein is Probable glucomannan 4-beta-mannosyltransferase 10 of Arabidopsis thaliana (Mouse-ear cress).